A 537-amino-acid polypeptide reads, in one-letter code: ATP-dependent 6-phosphofructokinase 5, chloroplastic (537 aa).

The transit peptide at 1–52 directs the protein to the chloroplast; that stretch reads MDALSQAISSGISVPYKNNSSSLVPSHGLTSLILRKSRSPVNPSSRSRVSVR. The disordered stretch occupies residues 35 to 64; the sequence is RKSRSPVNPSSRSRVSVRASEIQHSKTSAS. Residues 39–54 show a composition bias toward low complexity; sequence SPVNPSSRSRVSVRAS. Serine 147 carries the phosphoserine modification. Residues glycine 189, 253-254, and 278-281 contribute to the ATP site; these read RG and GNGT. A Mg(2+)-binding site is contributed by asparagine 279. Substrate-binding positions include 307–309, 352–354, glutamate 408, and 460–463; these read TID, MGR, and YMIR. The Proton acceptor role is filled by aspartate 309.

It belongs to the phosphofructokinase type A (PFKA) family. PPi-dependent PFK group II subfamily. Atypical ATP-dependent clade 'X' sub-subfamily. As to quaternary structure, homotetramer. Mg(2+) is required as a cofactor. As to expression, expressed in roots, leaves, stems and flowers.

It localises to the plastid. It is found in the chloroplast. The catalysed reaction is beta-D-fructose 6-phosphate + ATP = beta-D-fructose 1,6-bisphosphate + ADP + H(+). The protein operates within carbohydrate degradation; glycolysis; D-glyceraldehyde 3-phosphate and glycerone phosphate from D-glucose: step 3/4. With respect to regulation, allosterically activated by AMP. Functionally, catalyzes the phosphorylation of D-fructose 6-phosphate to fructose 1,6-bisphosphate by ATP, the first committing step of glycolysis. In Arabidopsis thaliana (Mouse-ear cress), this protein is ATP-dependent 6-phosphofructokinase 5, chloroplastic.